A 221-amino-acid polypeptide reads, in one-letter code: Orotate phosphoribosyltransferase (221 aa).

K26 contacts 5-phospho-alpha-D-ribose 1-diphosphate. F34–F35 provides a ligand contact to orotate. Residues Y72–K73, R98, K99, K102, H104, and D123–S131 contribute to the 5-phospho-alpha-D-ribose 1-diphosphate site. S127 and R155 together coordinate orotate.

This sequence belongs to the purine/pyrimidine phosphoribosyltransferase family. PyrE subfamily. As to quaternary structure, homodimer. Requires Mg(2+) as cofactor.

The catalysed reaction is orotidine 5'-phosphate + diphosphate = orotate + 5-phospho-alpha-D-ribose 1-diphosphate. It functions in the pathway pyrimidine metabolism; UMP biosynthesis via de novo pathway; UMP from orotate: step 1/2. Functionally, catalyzes the transfer of a ribosyl phosphate group from 5-phosphoribose 1-diphosphate to orotate, leading to the formation of orotidine monophosphate (OMP). In Herminiimonas arsenicoxydans, this protein is Orotate phosphoribosyltransferase.